Reading from the N-terminus, the 130-residue chain is Small ribosomal subunit protein uS8 (130 aa).

It belongs to the universal ribosomal protein uS8 family. In terms of assembly, part of the 30S ribosomal subunit. Contacts proteins S5 and S12.

Functionally, one of the primary rRNA binding proteins, it binds directly to 16S rRNA central domain where it helps coordinate assembly of the platform of the 30S subunit. The sequence is that of Small ribosomal subunit protein uS8 from Buchnera aphidicola subsp. Cinara cedri (strain Cc).